The following is an 813-amino-acid chain: Lon protease (813 aa).

Residues Leu-14–Met-207 form the Lon N-terminal domain. Residue Gly-359–Thr-366 participates in ATP binding. In terms of domain architecture, Lon proteolytic spans Glu-595 to Glu-776. Residues Ser-682 and Lys-725 contribute to the active site.

The protein belongs to the peptidase S16 family. Homohexamer. Organized in a ring with a central cavity.

It is found in the cytoplasm. The catalysed reaction is Hydrolysis of proteins in presence of ATP.. Functionally, ATP-dependent serine protease that mediates the selective degradation of mutant and abnormal proteins as well as certain short-lived regulatory proteins. Required for cellular homeostasis and for survival from DNA damage and developmental changes induced by stress. Degrades polypeptides processively to yield small peptide fragments that are 5 to 10 amino acids long. Binds to DNA in a double-stranded, site-specific manner. The sequence is that of Lon protease from Heliobacterium modesticaldum (strain ATCC 51547 / Ice1).